Here is a 185-residue protein sequence, read N- to C-terminus: Ribosome-recycling factor (185 aa).

It belongs to the RRF family.

It localises to the cytoplasm. Its function is as follows. Responsible for the release of ribosomes from messenger RNA at the termination of protein biosynthesis. May increase the efficiency of translation by recycling ribosomes from one round of translation to another. The sequence is that of Ribosome-recycling factor from Pseudarthrobacter chlorophenolicus (strain ATCC 700700 / DSM 12829 / CIP 107037 / JCM 12360 / KCTC 9906 / NCIMB 13794 / A6) (Arthrobacter chlorophenolicus).